A 199-amino-acid chain; its full sequence is Small ribosomal subunit protein mS38 (199 aa).

The protein belongs to the mitochondrion-specific ribosomal protein mS38 family. In terms of assembly, component of the mitochondrial small ribosomal subunit (mt-SSU). Mature mammalian 55S mitochondrial ribosomes consist of a small (28S) and a large (39S) subunit. The 28S small subunit contains a 12S ribosomal RNA (12S mt-rRNA) and 30 different proteins. The 39S large subunit contains a 16S rRNA (16S mt-rRNA), a copy of mitochondrial valine transfer RNA (mt-tRNA(Val)), which plays an integral structural role, and 52 different proteins. Interacts with Aurora-A. As to expression, ubiquitously expressed and especially highly expressed in heart, skeletal muscle and testis.

Its subcellular location is the mitochondrion matrix. The protein resides in the nucleus. May act as a negative regulator of Aurora-A kinase, by down-regulation through proteasome-dependent degradation. The sequence is that of Small ribosomal subunit protein mS38 (AURKAIP1) from Homo sapiens (Human).